A 616-amino-acid polypeptide reads, in one-letter code: UvrABC system protein C (616 aa).

A GIY-YIG domain is found at 21-99 (HQPGVYRMYD…IKLYLPKYNV (79 aa)). The 36-residue stretch at 209-244 (RQVIASLVEKMEQASQSLNFEQAATFRDQIQALRRV) folds into the UVR domain.

This sequence belongs to the UvrC family. As to quaternary structure, interacts with UvrB in an incision complex.

It localises to the cytoplasm. Its function is as follows. The UvrABC repair system catalyzes the recognition and processing of DNA lesions. UvrC both incises the 5' and 3' sides of the lesion. The N-terminal half is responsible for the 3' incision and the C-terminal half is responsible for the 5' incision. The chain is UvrABC system protein C from Photobacterium profundum (strain SS9).